Consider the following 555-residue polypeptide: uncharacterized protein (555 aa).

ABC transporter domains are found at residues 4–244 and 255–547; these read VKVK…PPYK and IQVR…ARFM. ATP-binding positions include 36-43 and 292-299; these read GKSGAGKS and GPSGVGKT.

Belongs to the ABC transporter superfamily.

This is an uncharacterized protein from Methanocaldococcus jannaschii (strain ATCC 43067 / DSM 2661 / JAL-1 / JCM 10045 / NBRC 100440) (Methanococcus jannaschii).